The primary structure comprises 604 residues: 2-isopropylmalate synthase 2, mitochondrial (604 aa).

The N-terminal 50 residues, 1-50 (MVKHSFIALAEHASKLRRSIPPVKLTYKNMLRDPSVKYRAFAPPKMVKRI), are a transit peptide targeting the mitochondrion. Residues 60-335 (PRWLSTDLRD…SPNLDFSDLT (276 aa)) enclose the Pyruvate carboxyltransferase domain. A divalent metal cation contacts are provided by aspartate 69, histidine 274, histidine 276, and asparagine 310.

It belongs to the alpha-IPM synthase/homocitrate synthase family. LeuA type 2 subfamily. In terms of assembly, homodimer. A divalent metal cation serves as cofactor.

It is found in the mitochondrion. It carries out the reaction 3-methyl-2-oxobutanoate + acetyl-CoA + H2O = (2S)-2-isopropylmalate + CoA + H(+). The protein operates within amino-acid biosynthesis; L-leucine biosynthesis; L-leucine from 3-methyl-2-oxobutanoate: step 1/4. In terms of biological role, catalyzes the condensation of the acetyl group of acetyl-CoA with 3-methyl-2-oxobutanoate (2-oxoisovalerate) to form 3-carboxy-3-hydroxy-4-methylpentanoate (2-isopropylmalate). Redundant to LEU4, responsible for about 20% of alpha-IPMS activity. Involved in leucine synthesis. The sequence is that of 2-isopropylmalate synthase 2, mitochondrial from Saccharomyces cerevisiae (strain ATCC 204508 / S288c) (Baker's yeast).